The primary structure comprises 285 residues: HTH-type transcriptional regulator MurR (285 aa).

In terms of domain architecture, HTH rpiR-type spans 1–77 (MLYLTKIRNA…MALIGEYSAS (77 aa)). Positions 37-56 (SRQMAKQLGISQSSIVKFAQ) form a DNA-binding region, H-T-H motif. The 141-residue stretch at 128–268 (IIEVISKAPF…FVGLVQLNDV (141 aa)) folds into the SIS domain.

As to quaternary structure, homotetramer.

It functions in the pathway amino-sugar metabolism; N-acetylmuramate degradation [regulation]. Represses the expression of the murPQ operon involved in the uptake and degradation of N-acetylmuramic acid (MurNAc). Binds to two adjacent inverted repeats within the operator region. MurNAc 6-phosphate, the substrate of MurQ, is the specific inducer that weakens binding of MurR to the operator. The chain is HTH-type transcriptional regulator MurR from Escherichia coli (strain ATCC 8739 / DSM 1576 / NBRC 3972 / NCIMB 8545 / WDCM 00012 / Crooks).